A 697-amino-acid chain; its full sequence is Polyribonucleotide nucleotidyltransferase (697 aa).

Mg(2+)-binding residues include Asp-487 and Asp-493. Residues 554 to 613 (PRIETIQIKPSKIAVVIGPGGKQIRAIIEQTGVQIDIDDTGLVNIAAIDLVSIEKAKAII) form the KH domain. An S1 motif domain is found at 623-691 (GRIYSGKAIS…ERGQIKLSRK (69 aa)).

This sequence belongs to the polyribonucleotide nucleotidyltransferase family. It depends on Mg(2+) as a cofactor.

It is found in the cytoplasm. The enzyme catalyses RNA(n+1) + phosphate = RNA(n) + a ribonucleoside 5'-diphosphate. Functionally, involved in mRNA degradation. Catalyzes the phosphorolysis of single-stranded polyribonucleotides processively in the 3'- to 5'-direction. The chain is Polyribonucleotide nucleotidyltransferase from Protochlamydia amoebophila (strain UWE25).